A 128-amino-acid polypeptide reads, in one-letter code: Ribonuclease P protein component (128 aa).

This sequence belongs to the RnpA family. Consists of a catalytic RNA component (M1 or rnpB) and a protein subunit.

It carries out the reaction Endonucleolytic cleavage of RNA, removing 5'-extranucleotides from tRNA precursor.. In terms of biological role, RNaseP catalyzes the removal of the 5'-leader sequence from pre-tRNA to produce the mature 5'-terminus. It can also cleave other RNA substrates such as 4.5S RNA. The protein component plays an auxiliary but essential role in vivo by binding to the 5'-leader sequence and broadening the substrate specificity of the ribozyme. The sequence is that of Ribonuclease P protein component from Methylococcus capsulatus (strain ATCC 33009 / NCIMB 11132 / Bath).